The following is a 278-amino-acid chain: HTH-type transcriptional activator RhaS (278 aa).

The 99-residue stretch at 174-272 folds into the HTH araC/xylS-type domain; that stretch reads NQLMAWLEEH…NWSPRDIRQG (99 aa). DNA-binding regions (H-T-H motif) lie at residues 191 to 212 and 239 to 262; these read EAVAEQFSLSLRTLHRQLKQHT and VTEIAYRCGFGDSNHFSTLFRREF.

In terms of assembly, binds DNA as a dimer.

Its subcellular location is the cytoplasm. Activates expression of the rhaBAD and rhaT operons. The sequence is that of HTH-type transcriptional activator RhaS from Salmonella schwarzengrund (strain CVM19633).